The primary structure comprises 283 residues: Protein/nucleic acid deglycase HchA (283 aa).

Residues histidine 86, glutamate 91, and histidine 123 each contribute to the Zn(2+) site. Cysteine 185 acts as the Nucleophile in catalysis.

Belongs to the peptidase C56 family. HchA subfamily. In terms of assembly, homodimer.

The protein localises to the cytoplasm. It catalyses the reaction N(omega)-(1-hydroxy-2-oxopropyl)-L-arginyl-[protein] + H2O = lactate + L-arginyl-[protein] + H(+). It carries out the reaction N(6)-(1-hydroxy-2-oxopropyl)-L-lysyl-[protein] + H2O = lactate + L-lysyl-[protein] + H(+). The enzyme catalyses S-(1-hydroxy-2-oxopropyl)-L-cysteinyl-[protein] + H2O = lactate + L-cysteinyl-[protein] + H(+). The catalysed reaction is N(omega)-(1-hydroxy-2-oxoethyl)-L-arginyl-[protein] + H2O = L-arginyl-[protein] + glycolate + H(+). It catalyses the reaction N(6)-(1-hydroxy-2-oxoethyl)-L-lysyl-[protein] + H2O = glycolate + L-lysyl-[protein] + H(+). It carries out the reaction S-(1-hydroxy-2-oxoethyl)-L-cysteinyl-[protein] + H2O = glycolate + L-cysteinyl-[protein] + H(+). The enzyme catalyses N(2)-(1-hydroxy-2-oxopropyl)-dGTP + H2O = lactate + dGTP + H(+). The catalysed reaction is N(2)-(1-hydroxy-2-oxopropyl)-GTP + H2O = lactate + GTP + H(+). It catalyses the reaction N(2)-(1-hydroxy-2-oxopropyl)-GDP + H2O = lactate + GDP + H(+). It carries out the reaction N(2)-(1-hydroxy-2-oxopropyl)-GMP + H2O = lactate + GMP + H(+). The enzyme catalyses N(2)-(1-hydroxy-2-oxoethyl)-dGTP + H2O = dGTP + glycolate + H(+). The catalysed reaction is N(2)-(1-hydroxy-2-oxoethyl)-GTP + H2O = glycolate + GTP + H(+). It catalyses the reaction N(2)-(1-hydroxy-2-oxoethyl)-GDP + H2O = glycolate + GDP + H(+). It carries out the reaction N(2)-(1-hydroxy-2-oxoethyl)-GMP + H2O = glycolate + GMP + H(+). The enzyme catalyses an N(2)-(1-hydroxy-2-oxopropyl)-guanosine in RNA + H2O = a guanosine in RNA + lactate + H(+). The catalysed reaction is an N(2)-(1-hydroxy-2-oxopropyl)-2'-deoxyguanosine in DNA + H2O = a 2'-deoxyguanosine in DNA + lactate + H(+). It catalyses the reaction an N(2)-(1-hydroxy-2-oxoethyl)-guanosine in RNA + H2O = a guanosine in RNA + glycolate + H(+). It carries out the reaction an N(2)-(1-hydroxy-2-oxoethyl)-2'-deoxyguanosine in DNA + H2O = a 2'-deoxyguanosine in DNA + glycolate + H(+). Its function is as follows. Protein and nucleotide deglycase that catalyzes the deglycation of the Maillard adducts formed between amino groups of proteins or nucleotides and reactive carbonyl groups of glyoxals. Thus, functions as a protein deglycase that repairs methylglyoxal- and glyoxal-glycated proteins, and releases repaired proteins and lactate or glycolate, respectively. Deglycates cysteine, arginine and lysine residues in proteins, and thus reactivates these proteins by reversing glycation by glyoxals. Acts on early glycation intermediates (hemithioacetals and aminocarbinols), preventing the formation of Schiff bases and advanced glycation endproducts (AGE). Also functions as a nucleotide deglycase able to repair glycated guanine in the free nucleotide pool (GTP, GDP, GMP, dGTP) and in DNA and RNA. Is thus involved in a major nucleotide repair system named guanine glycation repair (GG repair), dedicated to reversing methylglyoxal and glyoxal damage via nucleotide sanitization and direct nucleic acid repair. Plays an important role in protecting cells from carbonyl stress. The polypeptide is Protein/nucleic acid deglycase HchA (Escherichia coli O139:H28 (strain E24377A / ETEC)).